Reading from the N-terminus, the 553-residue chain is Replication factor C large subunit (553 aa).

50–57 (GGPGVGKT) serves as a coordination point for ATP. The interval 438–553 (GKRPGKPEAG…SKKQRTLFDF (116 aa)) is disordered. Positions 442–451 (GKPEAGEPRE) are enriched in basic and acidic residues. Residues 503 to 513 (EAPMAAAMPAA) are compositionally biased toward low complexity. Basic and acidic residues predominate over residues 532-553 (EPEKPPAAEDKCSKKQRTLFDF).

The protein belongs to the activator 1 small subunits family. RfcL subfamily. As to quaternary structure, heteromultimer composed of small subunits (RfcS) and large subunits (RfcL).

In terms of biological role, part of the RFC clamp loader complex which loads the PCNA sliding clamp onto DNA. The sequence is that of Replication factor C large subunit from Methanocella arvoryzae (strain DSM 22066 / NBRC 105507 / MRE50).